Reading from the N-terminus, the 357-residue chain is Eukaryotic translation initiation factor 3 subunit F (357 aa).

Residues 1–82 (MATPAVPVSA…PAPALPGPAL (82 aa)) are disordered. A2 carries the post-translational modification N-acetylalanine. Over residues 9 to 36 (SAPPATPTPVPAAAPASVPAPTPAPAAA) the composition is skewed to pro residues. The span at 37–74 (PVPAAAPASSSDPAAAAAATAAPGQTPASAQAPAQTPA) shows a compositional bias: low complexity. Phosphoserine; by CDK11; in vitro is present on S46. The 131-residue stretch at 92–222 (VRLHPVILAS…IKAYVSTLMG (131 aa)) folds into the MPN domain. Position 238 is an N6-acetyllysine (K238). The residue at position 258 (S258) is a Phosphoserine.

It belongs to the eIF-3 subunit F family. Component of the eukaryotic translation initiation factor 3 (eIF-3) complex, which is composed of 13 subunits: EIF3A, EIF3B, EIF3C, EIF3D, EIF3E, EIF3F, EIF3G, EIF3H, EIF3I, EIF3J, EIF3K, EIF3L and EIF3M. The eIF-3 complex appears to include 3 stable modules: module A is composed of EIF3A, EIF3B, EIF3G and EIF3I; module B is composed of EIF3F, EIF3H, and EIF3M; and module C is composed of EIF3C, EIF3D, EIF3E, EIF3K and EIF3L. EIF3C of module C binds EIF3B of module A and EIF3H of module B, thereby linking the three modules. EIF3J is a labile subunit that binds to the eIF-3 complex via EIF3B. The eIF-3 complex interacts with RPS6KB1 under conditions of nutrient depletion. Mitogenic stimulation leads to binding and activation of a complex composed of MTOR and RPTOR, leading to phosphorylation and release of RPS6KB1 and binding of EIF4B to eIF-3. Interacts with RNF139; the interaction leads to protein translation inhibitions in a ubiquitination-dependent manner. Interacts with DTX1, the interaction is required for deubiquitinating activity towards NOTCH1. In terms of processing, phosphorylation is enhanced upon serum stimulation. Phosphorylated during apoptosis by caspase-processed CDK11.

It is found in the cytoplasm. It catalyses the reaction Thiol-dependent hydrolysis of ester, thioester, amide, peptide and isopeptide bonds formed by the C-terminal Gly of ubiquitin (a 76-residue protein attached to proteins as an intracellular targeting signal).. In terms of biological role, component of the eukaryotic translation initiation factor 3 (eIF-3) complex, which is required for several steps in the initiation of protein synthesis. The eIF-3 complex associates with the 40S ribosome and facilitates the recruitment of eIF-1, eIF-1A, eIF-2:GTP:methionyl-tRNAi and eIF-5 to form the 43S pre-initiation complex (43S PIC). The eIF-3 complex stimulates mRNA recruitment to the 43S PIC and scanning of the mRNA for AUG recognition. The eIF-3 complex is also required for disassembly and recycling of post-termination ribosomal complexes and subsequently prevents premature joining of the 40S and 60S ribosomal subunits prior to initiation. The eIF-3 complex specifically targets and initiates translation of a subset of mRNAs involved in cell proliferation, including cell cycling, differentiation and apoptosis, and uses different modes of RNA stem-loop binding to exert either translational activation or repression. Functionally, deubiquitinates activated NOTCH1, promoting its nuclear import, thereby acting as a positive regulator of Notch signaling. This chain is Eukaryotic translation initiation factor 3 subunit F, found in Homo sapiens (Human).